Consider the following 361-residue polypeptide: MTQLNIAPTPADTAAANNNANAAAGAKQVARWRVADIVALYELPFNDLMFKAQQTHREHFDANTVQLSTLLSIKTGGCEEDCAYCPQSVHHDTGLQADKLMPVDEVLAAAKVAKENGATRFCMGAAWRNPKDRHLEPIKDMIRGVKAMGLETCVTLGMLETHQAQGLREAGLDYYNHNLDTSPEFYGQIISTRTYQDRLDTLERVRDAGINVCCGGIVGLGESRRERAGLIAQLANMEPYPESVPINNLVQVEGTPLTGTEAIDPFEFVRTIAIARITMPRAMVRLSAGREQMDEALQALCFLAGANSIFYGDQLLTTSNPQAEADRKLLERLGIRAEAAQQMPLDQSGCEHSCDKHAAPN.

Positions 63–290 constitute a Radical SAM core domain; sequence NTVQLSTLLS…RAMVRLSAGR (228 aa). Residues Cys78, Cys82, and Cys85 each contribute to the [4Fe-4S] cluster site. Residues Cys122, Cys153, Cys213, and Arg285 each coordinate [2Fe-2S] cluster.

This sequence belongs to the radical SAM superfamily. Biotin synthase family. Homodimer. [4Fe-4S] cluster serves as cofactor. It depends on [2Fe-2S] cluster as a cofactor.

It catalyses the reaction (4R,5S)-dethiobiotin + (sulfur carrier)-SH + 2 reduced [2Fe-2S]-[ferredoxin] + 2 S-adenosyl-L-methionine = (sulfur carrier)-H + biotin + 2 5'-deoxyadenosine + 2 L-methionine + 2 oxidized [2Fe-2S]-[ferredoxin]. The protein operates within cofactor biosynthesis; biotin biosynthesis; biotin from 7,8-diaminononanoate: step 2/2. Functionally, catalyzes the conversion of dethiobiotin (DTB) to biotin by the insertion of a sulfur atom into dethiobiotin via a radical-based mechanism. This Paraburkholderia phytofirmans (strain DSM 17436 / LMG 22146 / PsJN) (Burkholderia phytofirmans) protein is Biotin synthase.